A 334-amino-acid chain; its full sequence is Zinc finger Ran-binding domain-containing protein 2 (334 aa).

RanBP2-type zinc fingers lie at residues serine 9 to threonine 40 and serine 65 to alanine 94. The disordered stretch occupies residues arginine 117 to lysine 334. The span at aspartate 150–glycine 163 shows a compositional bias: acidic residues. The span at lysine 196 to histidine 212 shows a compositional bias: basic residues. Low complexity-rich tracts occupy residues serine 213–serine 224 and serine 258–proline 285. Residues arginine 302–serine 318 are compositionally biased toward basic residues. Positions serine 319–lysine 334 are enriched in low complexity.

It belongs to the ZRANB2 family.

It is found in the nucleus. Functionally, may regulate alternative splicing by interfering with constitutive 5'-splice site selection. The sequence is that of Zinc finger Ran-binding domain-containing protein 2 from Gallus gallus (Chicken).